Here is a 203-residue protein sequence, read N- to C-terminus: N-(5'-phosphoribosyl)anthranilate isomerase (203 aa).

The protein belongs to the TrpF family.

It catalyses the reaction N-(5-phospho-beta-D-ribosyl)anthranilate = 1-(2-carboxyphenylamino)-1-deoxy-D-ribulose 5-phosphate. The protein operates within amino-acid biosynthesis; L-tryptophan biosynthesis; L-tryptophan from chorismate: step 3/5. The polypeptide is N-(5'-phosphoribosyl)anthranilate isomerase (Geobacter sulfurreducens (strain ATCC 51573 / DSM 12127 / PCA)).